Consider the following 420-residue polypeptide: Acetyl-CoA acetyltransferase A, mitochondrial (420 aa).

The N-terminal 33 residues, 1–33, are a transit peptide targeting the mitochondrion; that stretch reads MAFCGTRTAARLSHSTRALHNTHRNFASQRTLN. C119 functions as the Acyl-thioester intermediate in the catalytic mechanism. CoA is bound by residues Y212, 251-253, and K256; that span reads RVD. Position 212 (Y212) interacts with K(+). Residues A273 and A274 each coordinate K(+). S277 serves as a coordination point for CoA. Residue V374 participates in K(+) binding. C406 (proton donor/acceptor) is an active-site residue.

The protein belongs to the thiolase-like superfamily. Thiolase family. As to quaternary structure, homotetramer.

The protein localises to the mitochondrion. It catalyses the reaction 2 acetyl-CoA = acetoacetyl-CoA + CoA. The enzyme catalyses propanoyl-CoA + acetyl-CoA = 2-methyl-3-oxobutanoyl-CoA + CoA. It functions in the pathway lipid metabolism; fatty acid beta-oxidation. In terms of biological role, this is one of the enzymes that catalyzes the last step of the mitochondrial beta-oxidation pathway, an aerobic process breaking down fatty acids into acetyl-CoA. Using free coenzyme A/CoA, catalyzes the thiolytic cleavage of medium- to long-chain 3-oxoacyl-CoAs into acetyl-CoA and a fatty acyl-CoA shortened by two carbon atoms. The activity of the enzyme is reversible and it can also catalyze the condensation of two acetyl-CoA molecules into acetoacetyl-CoA. Thereby, it plays a major role in ketone body metabolism. This is Acetyl-CoA acetyltransferase A, mitochondrial (acat1-a) from Xenopus laevis (African clawed frog).